The primary structure comprises 315 residues: Glycine--tRNA ligase alpha subunit (315 aa).

Belongs to the class-II aminoacyl-tRNA synthetase family. In terms of assembly, tetramer of two alpha and two beta subunits.

It is found in the cytoplasm. The catalysed reaction is tRNA(Gly) + glycine + ATP = glycyl-tRNA(Gly) + AMP + diphosphate. In Pseudomonas entomophila (strain L48), this protein is Glycine--tRNA ligase alpha subunit.